The primary structure comprises 816 residues: Cation/H(+) antiporter 8 (816 aa).

12 consecutive transmembrane segments (helical) span residues 64-84 (PKLE…NILF), 97-117 (MMLA…NSII), 127-147 (IDVA…LKGV), 163-183 (VTGV…FNLK), 197-214 (VMLL…ARLL), 227-247 (VALS…IANV), 255-275 (ADGL…FAVV), 297-317 (IHGV…LSQF), 343-363 (LESF…MLRT), 382-402 (FAVA…SVIV), 413-433 (SIIL…FYLF), and 447-467 (ILVL…GFLY).

The protein belongs to the monovalent cation:proton antiporter 2 (CPA2) transporter (TC 2.A.37) family. CHX (TC 2.A.37.4) subfamily. Specifically expressed in pollen.

It localises to the membrane. Functionally, may operate as a cation/H(+) antiporter. In Arabidopsis thaliana (Mouse-ear cress), this protein is Cation/H(+) antiporter 8 (CHX8).